The sequence spans 395 residues: Putative phosphatidate cytidylyltransferase (395 aa).

9 helical membrane-spanning segments follow: residues 13-33 (STVF…SAFA), 78-98 (FAFG…MNWE), 115-135 (SLLS…VIYF), 144-164 (WIWT…YMIS), 177-197 (IYSL…YFSV), 201-221 (WTTI…AYLF), 242-262 (AFFG…LYSI), 306-326 (FYIY…IFAI), and 358-378 (FDSS…AGIS).

Belongs to the CDS family.

Its subcellular location is the cell membrane. It carries out the reaction a 1,2-diacyl-sn-glycero-3-phosphate + CTP + H(+) = a CDP-1,2-diacyl-sn-glycerol + diphosphate. The protein operates within phospholipid metabolism; CDP-diacylglycerol biosynthesis; CDP-diacylglycerol from sn-glycerol 3-phosphate: step 3/3. In Mycoplasma pneumoniae (strain ATCC 29342 / M129 / Subtype 1) (Mycoplasmoides pneumoniae), this protein is Putative phosphatidate cytidylyltransferase (cdsA).